The chain runs to 66 residues: Conotoxin Cl14.1b (66 aa).

Positions 1–19 (MNVTVMFLVLLLTMPLTDG) are cleaved as a signal peptide. Residues 20-47 (FNIRAINGGELFGLVQRDAGNALDHGFY) constitute a propeptide that is removed on maturation.

Belongs to the conotoxin L superfamily. Post-translationally, contains 2 disulfide bonds. In terms of tissue distribution, expressed by the venom duct.

Its subcellular location is the secreted. The protein is Conotoxin Cl14.1b of Californiconus californicus (California cone).